The chain runs to 533 residues: CTP synthase (533 aa).

The amidoligase domain stretch occupies residues 1-265 (MTKFIFVTGG…PAYLARRLGL (265 aa)). Ser13 serves as a coordination point for CTP. Ser13 serves as a coordination point for UTP. Residue 14-19 (GLGKGI) coordinates ATP. An L-glutamine-binding site is contributed by Tyr54. Position 71 (Asp71) interacts with ATP. Residues Asp71 and Glu139 each coordinate Mg(2+). Residues 146–148 (DIE), 186–191 (KTKPTQ), and Lys222 contribute to the CTP site. UTP-binding positions include 186 to 191 (KTKPTQ) and Lys222. Residues 290–532 (EIAIVGKYVK…VEAAKKKKYG (243 aa)) enclose the Glutamine amidotransferase type-1 domain. Gly351 serves as a coordination point for L-glutamine. The active-site Nucleophile; for glutamine hydrolysis is Cys378. L-glutamine-binding positions include 379-382 (FGFQ), Glu402, and Arg459. Active-site residues include His505 and Glu507.

The protein belongs to the CTP synthase family. As to quaternary structure, homotetramer.

It carries out the reaction UTP + L-glutamine + ATP + H2O = CTP + L-glutamate + ADP + phosphate + 2 H(+). The catalysed reaction is L-glutamine + H2O = L-glutamate + NH4(+). The enzyme catalyses UTP + NH4(+) + ATP = CTP + ADP + phosphate + 2 H(+). The protein operates within pyrimidine metabolism; CTP biosynthesis via de novo pathway; CTP from UDP: step 2/2. With respect to regulation, allosterically activated by GTP, when glutamine is the substrate; GTP has no effect on the reaction when ammonia is the substrate. The allosteric effector GTP functions by stabilizing the protein conformation that binds the tetrahedral intermediate(s) formed during glutamine hydrolysis. Inhibited by the product CTP, via allosteric rather than competitive inhibition. In terms of biological role, catalyzes the ATP-dependent amination of UTP to CTP with either L-glutamine or ammonia as the source of nitrogen. Regulates intracellular CTP levels through interactions with the four ribonucleotide triphosphates. In Thermococcus kodakarensis (strain ATCC BAA-918 / JCM 12380 / KOD1) (Pyrococcus kodakaraensis (strain KOD1)), this protein is CTP synthase.